We begin with the raw amino-acid sequence, 671 residues long: Probable serine/threonine-protein kinase DDB_G0286627 (671 aa).

The 253-residue stretch at 31–283 (WVIERQLSKG…SHQLIKHPFF (253 aa)) folds into the Protein kinase domain. ATP-binding positions include 37–45 (LSKGSFGQV) and Lys-61. The Proton acceptor role is filled by Asp-148. A helical transmembrane segment spans residues 369-389 (FKIIYLFLILLFLMTILVNLN). Residues 410–523 (PESNPIKKPS…PPVTETPKPT (114 aa)) are disordered. Over residues 427 to 490 (NQYSEGSQSS…PTDSSTTDPP (64 aa)) the composition is skewed to low complexity. Over residues 491-513 (VTDPPITDPPITDPPVTDPPITE) the composition is skewed to pro residues.

The protein belongs to the protein kinase superfamily. STE Ser/Thr protein kinase family. Mg(2+) serves as cofactor.

It localises to the membrane. It carries out the reaction L-seryl-[protein] + ATP = O-phospho-L-seryl-[protein] + ADP + H(+). The enzyme catalyses L-threonyl-[protein] + ATP = O-phospho-L-threonyl-[protein] + ADP + H(+). The chain is Probable serine/threonine-protein kinase DDB_G0286627 from Dictyostelium discoideum (Social amoeba).